The chain runs to 630 residues: tRNA uridine 5-carboxymethylaminomethyl modification enzyme MnmG (630 aa).

FAD is bound by residues 13-18, valine 125, and serine 180; that span reads GGGHAG. 273–287 contacts NAD(+); that stretch reads GPRYCPSIEDKIHRF. Glutamine 370 lines the FAD pocket.

The protein belongs to the MnmG family. Homodimer. Heterotetramer of two MnmE and two MnmG subunits. Requires FAD as cofactor.

Its subcellular location is the cytoplasm. In terms of biological role, NAD-binding protein involved in the addition of a carboxymethylaminomethyl (cmnm) group at the wobble position (U34) of certain tRNAs, forming tRNA-cmnm(5)s(2)U34. The sequence is that of tRNA uridine 5-carboxymethylaminomethyl modification enzyme MnmG from Shewanella woodyi (strain ATCC 51908 / MS32).